The following is a 299-amino-acid chain: Protein translocase subunit SecF (299 aa).

A run of 6 helical transmembrane segments spans residues 14–34, 142–162, 166–186, 193–213, 245–265, and 270–290; these read VLIV…FYHG, IFLV…RFKL, IASI…LGVF, YIIV…IIIF, LTSV…EGSI, and LVFM…ASPI.

Belongs to the SecD/SecF family. SecF subfamily. Forms a complex with SecD. Part of the essential Sec protein translocation apparatus which comprises SecA, SecYEG and auxiliary proteins SecDF. Other proteins may also be involved.

It localises to the cell inner membrane. Functionally, part of the Sec protein translocase complex. Interacts with the SecYEG preprotein conducting channel. SecDF uses the proton motive force (PMF) to complete protein translocation after the ATP-dependent function of SecA. The polypeptide is Protein translocase subunit SecF (Borreliella burgdorferi (strain ATCC 35210 / DSM 4680 / CIP 102532 / B31) (Borrelia burgdorferi)).